We begin with the raw amino-acid sequence, 269 residues long: Glucosyl-3-phosphoglycerate/mannosyl-3-phosphoglycerate phosphatase (269 aa).

D6 (nucleophile) is an active-site residue. D6, D8, and D210 together coordinate Mg(2+).

It belongs to the HAD-like hydrolase superfamily. MPGP family. Monomer. Co(2+) serves as cofactor. Requires Mg(2+) as cofactor.

The enzyme catalyses (2R)-2-O-(alpha-D-glucopyranosyl)-3-phospho-glycerate + H2O = (2R)-2-O-(alpha-D-glucopyranosyl)-glycerate + phosphate. It carries out the reaction 2-O-(alpha-D-mannosyl)-3-phosphoglycerate + H2O = (2R)-2-O-(alpha-D-mannosyl)-glycerate + phosphate. In terms of biological role, involved in the biosynthesis of glucosylglycerate. Catalyzes the dephosphorylation of glucosyl-3-phosphoglycerate (GPG) and mannosyl-3-phosphoglycerate (MPG) to glucosylglycerate (GG) and mannosylglycerate (MG), respectively. This is Glucosyl-3-phosphoglycerate/mannosyl-3-phosphoglycerate phosphatase from Persephonella marina (strain DSM 14350 / EX-H1).